The primary structure comprises 137 residues: Ribonuclease VapC27 (137 aa).

A PINc domain is found at 7-125; it reads VDTSVAIPLL…ATRDARAKDT (119 aa). Positions 8 and 101 each coordinate Mg(2+).

This sequence belongs to the PINc/VapC protein family. In terms of assembly, interacts with cognate antitoxin VapB27. Mg(2+) is required as a cofactor.

The protein localises to the secreted. Its function is as follows. Probably the toxic component of a type II toxin-antitoxin (TA) system. An RNase. Its cognate antitoxin is VapB27. The sequence is that of Ribonuclease VapC27 from Mycobacterium tuberculosis (strain ATCC 25618 / H37Rv).